We begin with the raw amino-acid sequence, 380 residues long: Cytochrome b (380 aa).

The next 4 helical transmembrane spans lie at 34–54 (FGSL…LLAM), 78–99 (WLIR…FLHI), 114–134 (WNTG…GYVL), and 179–199 (FFAL…THLM). Residues H84 and H98 each coordinate heme b. Residues H183 and H197 each contribute to the heme b site. Residue H202 participates in a ubiquinone binding. The next 4 helical transmembrane spans lie at 227-247 (LKDI…ALFS), 289-309 (LGGV…PFLH), 321-341 (LSQT…WVGS), and 348-368 (FIII…ILFP).

This sequence belongs to the cytochrome b family. The cytochrome bc1 complex contains 11 subunits: 3 respiratory subunits (MT-CYB, CYC1 and UQCRFS1), 2 core proteins (UQCRC1 and UQCRC2) and 6 low-molecular weight proteins (UQCRH/QCR6, UQCRB/QCR7, UQCRQ/QCR8, UQCR10/QCR9, UQCR11/QCR10 and a cleavage product of UQCRFS1). This cytochrome bc1 complex then forms a dimer. Heme b serves as cofactor.

Its subcellular location is the mitochondrion inner membrane. Component of the ubiquinol-cytochrome c reductase complex (complex III or cytochrome b-c1 complex) that is part of the mitochondrial respiratory chain. The b-c1 complex mediates electron transfer from ubiquinol to cytochrome c. Contributes to the generation of a proton gradient across the mitochondrial membrane that is then used for ATP synthesis. This Tragopan satyra (Satyr tragopan) protein is Cytochrome b (MT-CYB).